The chain runs to 140 residues: MMVDYRPASIMDFLFVDSKAKRHTTPGYSPVVTEPIADLAVTGLSRGERTGPDFIQVPMVAFGRGTQVQEKAFGLTLQQLKRNISEPTSLKLWIRDKNKVLVHYIYAPVYQSATNIQERWPGALAVRCYGHLYLHPQMLR.

This is an uncharacterized protein from Neurospora crassa (strain ATCC 24698 / 74-OR23-1A / CBS 708.71 / DSM 1257 / FGSC 987).